The chain runs to 552 residues: Cytochrome c oxidase subunit 1 (552 aa).

Residues 35 to 55 traverse the membrane as a helical segment; sequence VIGIQYLVTAFIFYLIGGLMA. Fe(II)-heme a is bound at residue H82. 6 helical membrane-spanning segments follow: residues 85–105, 120–140, 164–184, 211–231, 252–272, and 284–304; these read IMIF…YLVP, ALAF…FLFG, WILA…NFIV, LLAL…LFDI, LFWF…FGIM, and IFGY…GLFV. Cu cation-binding residues include H258 and Y262. A cross-link (1'-histidyl-3'-tyrosine (His-Tyr)) is located at residues 258–262; it reads HPAVY. Residues H307 and H308 each coordinate Cu cation. 5 consecutive transmembrane segments (helical) span residues 321-341, 355-375, 390-410, 426-446, and 470-490; these read FFTI…FSWV, MLFA…GVTL, VVAH…YAGI, LGIL…LPMH, and ICTI…INII. H393 serves as a coordination point for heme a3. Residue H395 participates in Fe(II)-heme a binding.

Belongs to the heme-copper respiratory oxidase family. Requires Cu(2+) as cofactor. Heme serves as cofactor.

The protein localises to the cell membrane. The enzyme catalyses 4 Fe(II)-[cytochrome c] + O2 + 8 H(+)(in) = 4 Fe(III)-[cytochrome c] + 2 H2O + 4 H(+)(out). It participates in energy metabolism; oxidative phosphorylation. In terms of biological role, cytochrome c oxidase is the component of the respiratory chain that catalyzes the reduction of oxygen to water. Subunits 1-3 form the functional core of the enzyme complex. CO I is the catalytic subunit of the enzyme. Electrons originating in cytochrome c are transferred via the copper A center of subunit 2 and heme A of subunit 1 to the bimetallic center formed by heme A3 and copper B. This chain is Cytochrome c oxidase subunit 1 (ctaD), found in Thermostichus vulcanus (Synechococcus vulcanus).